The following is a 298-amino-acid chain: NFU1 iron-sulfur cluster scaffold homolog, mitochondrial (298 aa).

The interval 194-262 (IKELLDTRIR…IPEVESVEQV (69 aa)) is nifU. The [4Fe-4S] cluster site is built by Cys-231 and Cys-234.

Belongs to the NifU family.

Its subcellular location is the mitochondrion. Functionally, molecular scaffold for [Fe-S] cluster assembly of mitochondrial iron-sulfur proteins. The polypeptide is NFU1 iron-sulfur cluster scaffold homolog, mitochondrial (Drosophila grimshawi (Hawaiian fruit fly)).